The chain runs to 194 residues: MKVILLERVEGTGVLGDEVTVKDGFARNYLLPRGKALRATKANLATFEAQRAEIEARNVKNRESAAKNGEALDGTQYILIRQAGESGQLYGSVAGRDVADAIKAEGGKVDRSMVVLDKPIKTLGVHEVKVKLHAEVTITVTLNIARSQDEAERQARGENVINSQFEEDRAAEAEAAQDMAEGGAGSFEGDHYEA.

Residues 148-194 are disordered; that stretch reads QDEAERQARGENVINSQFEEDRAAEAEAAQDMAEGGAGSFEGDHYEA.

This sequence belongs to the bacterial ribosomal protein bL9 family.

Functionally, binds to the 23S rRNA. This Caulobacter vibrioides (strain ATCC 19089 / CIP 103742 / CB 15) (Caulobacter crescentus) protein is Large ribosomal subunit protein bL9.